Reading from the N-terminus, the 369-residue chain is tRNA 2-selenouridine synthase (369 aa).

The Rhodanese domain occupies 12-136 (FLEDTPLMDV…LRNFLFETTR (125 aa)). The active-site S-selanylcysteine intermediate is the Cys-95.

The protein belongs to the SelU family. Monomer.

It carries out the reaction 5-methylaminomethyl-2-thiouridine(34) in tRNA + selenophosphate + (2E)-geranyl diphosphate + H2O + H(+) = 5-methylaminomethyl-2-selenouridine(34) in tRNA + (2E)-thiogeraniol + phosphate + diphosphate. The catalysed reaction is 5-methylaminomethyl-2-thiouridine(34) in tRNA + (2E)-geranyl diphosphate = 5-methylaminomethyl-S-(2E)-geranyl-thiouridine(34) in tRNA + diphosphate. It catalyses the reaction 5-methylaminomethyl-S-(2E)-geranyl-thiouridine(34) in tRNA + selenophosphate + H(+) = 5-methylaminomethyl-2-(Se-phospho)selenouridine(34) in tRNA + (2E)-thiogeraniol. The enzyme catalyses 5-methylaminomethyl-2-(Se-phospho)selenouridine(34) in tRNA + H2O = 5-methylaminomethyl-2-selenouridine(34) in tRNA + phosphate. Functionally, involved in the post-transcriptional modification of the uridine at the wobble position (U34) of tRNA(Lys), tRNA(Glu) and tRNA(Gln). Catalyzes the conversion of 2-thiouridine (S2U-RNA) to 2-selenouridine (Se2U-RNA). Acts in a two-step process involving geranylation of 2-thiouridine (S2U) to S-geranyl-2-thiouridine (geS2U) and subsequent selenation of the latter derivative to 2-selenouridine (Se2U) in the tRNA chain. This chain is tRNA 2-selenouridine synthase, found in Pseudomonas paraeruginosa (strain DSM 24068 / PA7) (Pseudomonas aeruginosa (strain PA7)).